A 173-amino-acid polypeptide reads, in one-letter code: NADH-ubiquinone oxidoreductase chain 6 (173 aa).

The next 5 helical transmembrane spans lie at 1 to 21, 27 to 47, 53 to 73, 86 to 106, and 139 to 159; these read MTYI…AVAS, FAAL…VGYG, LVLF…SAAL, SVLG…GWFW, and YGGG…FVVL.

It belongs to the complex I subunit 6 family.

The protein localises to the mitochondrion membrane. The catalysed reaction is a ubiquinone + NADH + 5 H(+)(in) = a ubiquinol + NAD(+) + 4 H(+)(out). Functionally, core subunit of the mitochondrial membrane respiratory chain NADH dehydrogenase (Complex I) that is believed to belong to the minimal assembly required for catalysis. Complex I functions in the transfer of electrons from NADH to the respiratory chain. The immediate electron acceptor for the enzyme is believed to be ubiquinone. This Salmo salar (Atlantic salmon) protein is NADH-ubiquinone oxidoreductase chain 6 (MT-ND6).